Reading from the N-terminus, the 360-residue chain is MAKSPEVEHPVKAFGWAARDTSGHLSPFHFSRRATGEHDVQFKVLYCGICHSDLHMIKNEWGFTKYPIVPGHEIVGIVTEVGSKVEKFKVGDKVGVGCLVGSCRKCDMCTKDLENYCPGQILTYSATYTDGTTTYGGYSDLMVADEHFVIRWPENLPMDIGAPLLCAGITTYSPLRYFGLDKPGTHVGVVGLGGLGHVAVKFAKAFGAKVTVISTSESKKQEALEKLGADSFLVSRDPEQMKAAAASLDGIIDTVSAIHPIMPLLSILKSHGKLILVGAPEKPLELPSFPLIAGRKIIAGSAIGGLKETQEMIDFAAKHNVLPDVELVSMDYVNTAMERLLKADVKYRFVIDVANTLKSA.

Positions 50, 72, 103, 106, 109, 117, and 166 each coordinate Zn(2+).

It belongs to the zinc-containing alcohol dehydrogenase family. Zn(2+) serves as cofactor. Present in seedlings and vascular tissues (at protein level). Restricted to the epidermis.

The enzyme catalyses (6E)-8-hydroxygeraniol + 2 NADP(+) = (6E)-8-oxogeranial + 2 NADPH + 2 H(+). In terms of biological role, dehydrogenase involved in the biosynthesis of oxogeranial from hydroxygeraniol, a precursor of the terpenoid indole alkaloids such as vinblastine and vincristine. This Catharanthus roseus (Madagascar periwinkle) protein is 8-hydroxygeraniol dehydrogenase (10HGO).